The sequence spans 218 residues: 2-phospho-L-lactate guanylyltransferase (218 aa).

Belongs to the CofC family. In terms of assembly, homodimer.

It carries out the reaction (2S)-2-phospholactate + GTP + H(+) = (2S)-lactyl-2-diphospho-5'-guanosine + diphosphate. It participates in cofactor biosynthesis; coenzyme F420 biosynthesis. Guanylyltransferase that catalyzes the activation of (2S)-2-phospholactate (2-PL) as (2S)-lactyl-2-diphospho-5'-guanosine, via the condensation of 2-PL with GTP. It is involved in the biosynthesis of coenzyme F420, a hydride carrier cofactor. The protein is 2-phospho-L-lactate guanylyltransferase of Methanocaldococcus fervens (strain DSM 4213 / JCM 15782 / AG86) (Methanococcus fervens).